A 187-amino-acid chain; its full sequence is Elongation factor P 2 (187 aa).

The protein belongs to the elongation factor P family.

Its subcellular location is the cytoplasm. Its pathway is protein biosynthesis; polypeptide chain elongation. Involved in peptide bond synthesis. Stimulates efficient translation and peptide-bond synthesis on native or reconstituted 70S ribosomes in vitro. Probably functions indirectly by altering the affinity of the ribosome for aminoacyl-tRNA, thus increasing their reactivity as acceptors for peptidyl transferase. The sequence is that of Elongation factor P 2 from Geobacter sulfurreducens (strain ATCC 51573 / DSM 12127 / PCA).